Reading from the N-terminus, the 398-residue chain is Serine/threonine-protein kinase UL13 (398 aa).

A compositionally biased stretch (gly residues) spans 1 to 10 (MAAGGGGGGV). The disordered stretch occupies residues 1–44 (MAAGGGGGGVSRAALARPPIHRGTSAPGGAIAAAGGDGDGDEAS). The 319-residue stretch at 80-398 (TGDPVAVGAG…GGARFAELAA (319 aa)) folds into the Protein kinase domain. ATP contacts are provided by residues 86 to 94 (VGAGSYGSV) and lysine 103. Catalysis depends on aspartate 194, which acts as the Proton acceptor.

This sequence belongs to the protein kinase superfamily. Ser/Thr protein kinase family. Autophosphorylated.

The protein resides in the virion tegument. It localises to the host nucleus. It is found in the host cytoplasm. The protein localises to the host endoplasmic reticulum. It carries out the reaction L-seryl-[protein] + ATP = O-phospho-L-seryl-[protein] + ADP + H(+). The enzyme catalyses L-threonyl-[protein] + ATP = O-phospho-L-threonyl-[protein] + ADP + H(+). Functionally, multifunctional serine/threonine kinase that plays a role in several processes including egress of virus particles from the nucleus, modulation of the actin cytoskeleton and regulation of viral and cellular gene expression. Regulates the nuclear localization of viral envelopment factors UL34 and UL31, by phosphorylating the US3 kinase, indicating a role in nuclear egress. Disrupts host nuclear lamins, including LMNA and LMNB1. Phosphorylates the viral Fc receptor composed of glycoproteins E (gE) and I (gI). Phosphorylation of glycoprotein E (gE) by UL13 alters its subcellular localization, from the host early endosome to the plasma membrane. Participates in the transcriptional regulation of cellular and viral mRNAs mainly by phosphorylating the viral transcriptional regulator ICP22. Functions as an antagonist of the host RLR-mediated antiviral responses via suppression of the transcription of cytosolic receptors RIGI and IFIH1. Facilitates immune evasion also by recruiting host RNF5 to initiate the 'Lys-27'-/'Lys-29'-linked polyubiquitination of STING1; leading to its degradation. Blocks host IFN-beta transactivation mediated by the cGAS-STING pathway by phosphorylating host IRF3. In turn, IRF3 binding to the IRF3-responsive promoters and downstream interferon stimulated genes/ISG expression are greatly impaired. Induces the activation of the host DNA damage response via H2AX phosphorylation to improve efficient viral replication and progeny production. The polypeptide is Serine/threonine-protein kinase UL13 (UL13) (Suid herpesvirus 1 (strain NIA-3) (SuHV-1)).